The following is a 1050-amino-acid chain: Sucrose-phosphate synthase 4 (1050 aa).

Residues 134-167 form a disordered region; sequence QGRNDAEEDLLSELSEGEKDKNDGEKEKSEVVTT. Residue serine 148 is modified to Phosphoserine. Residues 149–163 are compositionally biased toward basic and acidic residues; that stretch reads EGEKDKNDGEKEKSE. Serine 180 bears the Phosphoserine mark.

The protein belongs to the glycosyltransferase 1 family. Homodimer or homotetramer.

The catalysed reaction is beta-D-fructose 6-phosphate + UDP-alpha-D-glucose = sucrose 6(F)-phosphate + UDP + H(+). It functions in the pathway glycan biosynthesis; sucrose biosynthesis; sucrose from D-fructose 6-phosphate and UDP-alpha-D-glucose: step 1/2. With respect to regulation, activity is regulated by phosphorylation and moderated by concentration of metabolites and light. In terms of biological role, plays a role in photosynthetic sucrose synthesis by catalyzing the rate-limiting step of sucrose biosynthesis from UDP-glucose and fructose- 6-phosphate. Involved in the regulation of carbon partitioning in the leaves of plants. May regulate the synthesis of sucrose and therefore play a major role as a limiting factor in the export of photoassimilates out of the leaf. Plays a role for sucrose availability that is essential for plant growth and fiber elongation. The protein is Sucrose-phosphate synthase 4 of Arabidopsis thaliana (Mouse-ear cress).